The sequence spans 802 residues: Outer membrane usher protein PefC (802 aa).

Residues 1–24 form the signal peptide; the sequence is MSFHHRVFKLSALSLALFSHLSFA. The cysteines at positions 782 and 801 are disulfide-linked.

Belongs to the fimbrial export usher family.

The protein resides in the cell outer membrane. Involved in the export and assembly of FimA fimbrial subunits across the outer membrane. The protein is Outer membrane usher protein PefC (pefC) of Salmonella typhimurium (strain LT2 / SGSC1412 / ATCC 700720).